Here is a 524-residue protein sequence, read N- to C-terminus: L-lactate permease (524 aa).

13 helical membrane-spanning segments follow: residues 12–34 (LAVS…TVFK), 38–60 (IQAA…HLPF), 67–89 (IVQG…VWLY), 127–149 (LEGA…SLGF), 156–178 (MLCL…VGII), 193–215 (SMMT…IWLM), 224–246 (ILPA…TIFI), 250–267 (LADI…ALFL), 297–319 (WSPF…KGLL), 339–361 (IEVG…VTTV), 374–396 (SLLK…IIGI), 411–433 (EAVA…IGVF), and 505–522 (YSFG…ILSL).

Belongs to the lactate permease family.

It is found in the cell membrane. May play a role in L-lactate transport. The sequence is that of L-lactate permease (lctP) from Halalkalibacterium halodurans (strain ATCC BAA-125 / DSM 18197 / FERM 7344 / JCM 9153 / C-125) (Bacillus halodurans).